Reading from the N-terminus, the 266-residue chain is Non-structural maintenance of chromosomes element 1 homolog (266 aa).

Residues Met-1–Ala-102 are interaction with NSMCE3. The RING-type; atypical zinc-finger motif lies at Cys-191–Asn-232. The tract at residues Glu-246–His-266 is disordered. Residues Ser-256–His-266 show a composition bias toward basic residues.

The protein belongs to the NSE1 family. Component of the SMC5-SMC6 complex which consists at least of SMC5, SMC6, NSMCE2, NSMCE1, NSMCE4A or EID3 and NSMCE3. NSMCE1, NSMCE4A or EID3 and NSMCE3 probably form a subcomplex that bridges the head domains of the SMC5-SMC6 heterodimer. Interacts with NSMCE3. Ubiquitinated.

Its subcellular location is the nucleus. The protein resides in the chromosome. It localises to the telomere. It carries out the reaction S-ubiquitinyl-[E2 ubiquitin-conjugating enzyme]-L-cysteine + [acceptor protein]-L-lysine = [E2 ubiquitin-conjugating enzyme]-L-cysteine + N(6)-ubiquitinyl-[acceptor protein]-L-lysine.. RING-type zinc finger-containing E3 ubiquitin ligase that assembles with melanoma antigen protein (MAGE) to catalyze the direct transfer of ubiquitin from E2 ubiquitin-conjugating enzyme to a specific substrate. Within MAGE-RING ubiquitin ligase complex, MAGE stimulates and specifies ubiquitin ligase activity likely through recruitment and/or stabilization of the E2 ubiquitin-conjugating enzyme at the E3:substrate complex. Involved in maintenance of genome integrity, DNA damage response and DNA repair. NSMCE3/MAGEG1 and NSMCE1 ubiquitin ligase are components of SMC5-SMC6 complex and may positively regulate homologous recombination-mediated DNA repair. The protein is Non-structural maintenance of chromosomes element 1 homolog (Nsmce1) of Mus musculus (Mouse).